Here is a 343-residue protein sequence, read N- to C-terminus: L-threonine 3-dehydrogenase (343 aa).

Cys-40 is a Zn(2+) binding site. Residues Thr-42 and His-45 each act as charge relay system in the active site. Zn(2+) is bound by residues His-65, Glu-66, Cys-95, Cys-98, Cys-101, and Cys-109. NAD(+)-binding positions include Ile-177, Asp-197, Arg-202, 264–266, and 288–289; these read LGI and IY.

It belongs to the zinc-containing alcohol dehydrogenase family. Homotetramer. Zn(2+) is required as a cofactor.

The protein resides in the cytoplasm. The catalysed reaction is L-threonine + NAD(+) = (2S)-2-amino-3-oxobutanoate + NADH + H(+). It functions in the pathway amino-acid degradation; L-threonine degradation via oxydo-reductase pathway; glycine from L-threonine: step 1/2. Functionally, catalyzes the NAD(+)-dependent oxidation of L-threonine to 2-amino-3-ketobutyrate. The chain is L-threonine 3-dehydrogenase from Aliivibrio fischeri (strain ATCC 700601 / ES114) (Vibrio fischeri).